A 217-amino-acid polypeptide reads, in one-letter code: Snake venom metalloproteinase lebetase-4 (217 aa).

A propeptide spanning residues 1-14 (SCRKKASQLNLTPE) is cleaved from the precursor. A Pyrrolidone carboxylic acid modification is found at Gln-15. Residues 21–217 (RYIELVIVAD…HNPQCILNQP (197 aa)) form the Peptidase M12B domain. Ca(2+) contacts are provided by Glu-24 and Asp-108. 3 disulfides stabilise this stretch: Cys-132–Cys-212, Cys-172–Cys-196, and Cys-174–Cys-179. A Zn(2+)-binding site is contributed by His-157. Residue Glu-158 is part of the active site. His-161 and His-167 together coordinate Zn(2+). Ca(2+) is bound by residues Cys-212 and Asn-215.

Belongs to the venom metalloproteinase (M12B) family. P-I subfamily. In terms of assembly, monomer. Zn(2+) is required as a cofactor. As to expression, expressed by the venom gland.

The protein resides in the secreted. With respect to regulation, fibrinolytic and caseinolytic activities are inhibited by Cd(2+), Cu(2+) and Co(2+) ions. Not inhibited by Mg(2+), Ca(2+) and Ba(2+). Also inhibited by EDTA, EGTA and 1,10-phenanthroline. Functionally, snake venom zinc metalloprotease that hydrolyzes the Aalpha-chain and more slowly the Bbeta-chain of fibrin and fibrinogen. Also hydrolyzes casein and B-chain of oxidized insulin. Its fibrinolytic activity is direct, without any plasminogen activation. Inhibits ADP-induced and collagen-induced platelet aggregation. Shows low hemorrhagic activity. Cleaves the plasma proteinase inhibitors alpha(2)-macroglobulin (A2M) and alpha(2)M-related pregnancy zone protein (PZP), and is inhibited by them. The protein is Snake venom metalloproteinase lebetase-4 of Macrovipera lebetinus (Levantine viper).